The chain runs to 233 residues: Antilisterial bacteriocin subtilosin biosynthesis protein AlbG (233 aa).

Transmembrane regions (helical) follow at residues 7 to 27, 46 to 66, 116 to 136, 145 to 165, 176 to 198, and 203 to 220; these read FTLL…VQAV, GLLA…LHYV, TYVM…FEIV, TPPA…LFCM, GSLF…MLSF, and LLFL…SFIY.

It is found in the cell membrane. Functionally, involved in the production of the bacteriocin subtilosin. The chain is Antilisterial bacteriocin subtilosin biosynthesis protein AlbG (albG) from Bacillus subtilis (strain 168).